A 2280-amino-acid polypeptide reads, in one-letter code: Metacaspase-3 (2280 aa).

7 disordered regions span residues 56-83 (ILSK…DRED), 202-284 (YSTE…THRG), 791-819 (YKNS…MVNN), 931-954 (DDNS…RYDK), 994-1015 (SGKY…DDSE), 1278-1306 (KTNN…NPFI), and 1469-1500 (KAPT…NANA). Residues 63–83 (NKNENIKKRINEKDNDTDRED) are compositionally biased toward basic and acidic residues. Composition is skewed to polar residues over residues 205–219 (EHTQ…TSKR) and 228–278 (DKAQ…NRKG). Composition is skewed to low complexity over residues 793–819 (NSMN…MVNN) and 931–941 (DDNSVQDSFFS). Composition is skewed to low complexity over residues 1278-1303 (KTNN…NNSN) and 1482-1500 (APTN…NANA).

This sequence belongs to the peptidase C14B family.

Protease that cleaves specifically after arginine or lysine residues. This Plasmodium falciparum (isolate 3D7) protein is Metacaspase-3.